Here is a 205-residue protein sequence, read N- to C-terminus: Heat shock protein beta-1 (205 aa).

Arg12 carries the omega-N-methylarginine modification. Phosphoserine; by MAPKAPK2 and MAPKAPK3 is present on Ser15. Residues Ser26 and Ser65 each carry the phosphoserine modification. Positions 70–205 (APAYSRALSR…AAKSDETAAK (136 aa)) are interaction with TGFB1I1. Positions 76–184 (ALSRQLSSGV…QSNEITIPVT (109 aa)) constitute a sHSP domain. 2 positions are modified to phosphoserine; by MAPKAPK2, MAPKAPK3 and MAPKAPK5: Ser78 and Ser82. A phosphoserine mark is found at Ser83, Ser86, and Ser98. Lys123 is modified (N6-acetyllysine). Thr174 bears the Phosphothreonine mark. Phosphoserine is present on residues Ser176 and Ser199.

This sequence belongs to the small heat shock protein (HSP20) family. Homooligomer. Homodimer; becomes monomeric upon activation. Heterooligomer; with HSPB6. Associates with alpha- and beta-tubulin. Interacts with TGFB1I1. Interacts with CRYAB. Interacts with HSPB8. Interacts with HSPBAP1. In terms of processing, phosphorylated upon exposure to protein kinase C activators and heat shock. Phosphorylation by MAPKAPK2 and MAPKAPK3 in response to stress dissociates HSPB1 from large small heat-shock protein (sHsps) oligomers and impairs its chaperone activity and ability to protect against oxidative stress effectively. Phosphorylation by MAPKAPK5 in response to PKA stimulation induces F-actin rearrangement. As to expression, detected in all tissues tested: skeletal muscle, heart, aorta, large intestine, small intestine, stomach, esophagus, bladder, adrenal gland, thyroid, pancreas, testis, adipose tissue, kidney, liver, spleen, cerebral cortex, blood serum and cerebrospinal fluid. Highest levels are found in the heart and in tissues composed of striated and smooth muscle.

The protein localises to the cytoplasm. It localises to the nucleus. It is found in the cytoskeleton. Its subcellular location is the spindle. Its function is as follows. Small heat shock protein which functions as a molecular chaperone probably maintaining denatured proteins in a folding-competent state. Plays a role in stress resistance and actin organization. Through its molecular chaperone activity may regulate numerous biological processes including the phosphorylation and the axonal transport of neurofilament proteins. This Homo sapiens (Human) protein is Heat shock protein beta-1 (HSPB1).